The chain runs to 481 residues: MIPVILSGGSGSRLWPLSRKQYPKQFLALTGDDTLFQQTIKRLAFDGMQAPLLVCNKEHRFIVQEQLEAQNLASQAILLEPFGRNTAPAVAIAAMKLVAEGRDELLLILPADHVIEDQRAFQQALALATNAAEKGEMVLFGIPASRPETGYGYIRASADAQLPEGVSRVQSFVEKPDEARAREFVAAGGYYWNSGMFLFRASRYLEELKKHDADIYDTCLLALERSQHDGDLVNIDAATFECCPDNSIDYAVMEKTSRACVVPLSAGWNDVGSWSSIWDVHAKDANGNVTKGDVLVHDSHNCLVHGNGKLVSVIGLEDIVVVETKDAMMIAHKDRVQDVKHVVKDLDAQGRSETQNHCEVYRPWGSYDSVDMGGRFQVKHITVKPGARLSLQMHHHRAEHWIVVSGTAQVTCDDKTFLLTENQSTYIPIASVHRLANPGKIPLEIIEVQSGSYLGEDDIERLEDVYGRTAEPALQVVAGSR.

It belongs to the mannose-6-phosphate isomerase type 2 family. As to quaternary structure, monomer. Requires Co(2+) as cofactor.

It carries out the reaction D-mannose 6-phosphate = D-fructose 6-phosphate. It catalyses the reaction alpha-D-mannose 1-phosphate + GTP + H(+) = GDP-alpha-D-mannose + diphosphate. The protein operates within nucleotide-sugar biosynthesis; GDP-alpha-D-mannose biosynthesis; GDP-alpha-D-mannose from alpha-D-mannose 1-phosphate (GTP route): step 1/1. It functions in the pathway nucleotide-sugar biosynthesis; GDP-alpha-D-mannose biosynthesis; alpha-D-mannose 1-phosphate from D-fructose 6-phosphate: step 1/2. Its function is as follows. Produces a precursor for alginate polymerization. The alginate layer provides a protective barrier against host immune defenses and antibiotics. The polypeptide is Alginate biosynthesis protein AlgA (algA) (Pseudomonas aeruginosa (strain ATCC 15692 / DSM 22644 / CIP 104116 / JCM 14847 / LMG 12228 / 1C / PRS 101 / PAO1)).